The following is a 79-amino-acid chain: Small ribosomal subunit protein bS18 (79 aa).

This sequence belongs to the bacterial ribosomal protein bS18 family. As to quaternary structure, part of the 30S ribosomal subunit. Forms a tight heterodimer with protein bS6.

In terms of biological role, binds as a heterodimer with protein bS6 to the central domain of the 16S rRNA, where it helps stabilize the platform of the 30S subunit. The protein is Small ribosomal subunit protein bS18 of Renibacterium salmoninarum (strain ATCC 33209 / DSM 20767 / JCM 11484 / NBRC 15589 / NCIMB 2235).